Consider the following 270-residue polypeptide: Type III pantothenate kinase (270 aa).

An ATP-binding site is contributed by 6-13 (DVRNTHTV). 109–112 (GADR) contributes to the substrate binding site. Residue Asp-111 is the Proton acceptor of the active site. Position 131 (Asp-131) interacts with K(+). Ser-134 is an ATP binding site. Residue Thr-186 coordinates substrate.

This sequence belongs to the type III pantothenate kinase family. As to quaternary structure, homodimer. It depends on NH4(+) as a cofactor. K(+) serves as cofactor.

The protein localises to the cytoplasm. It catalyses the reaction (R)-pantothenate + ATP = (R)-4'-phosphopantothenate + ADP + H(+). It participates in cofactor biosynthesis; coenzyme A biosynthesis; CoA from (R)-pantothenate: step 1/5. Functionally, catalyzes the phosphorylation of pantothenate (Pan), the first step in CoA biosynthesis. This Mycolicibacterium gilvum (strain PYR-GCK) (Mycobacterium gilvum (strain PYR-GCK)) protein is Type III pantothenate kinase.